The following is a 73-amino-acid chain: Alternative prion protein (73 aa).

A helical membrane pass occupies residues 32–52 (WWWLGAASWWWLGAAPWWWLG).

Detected in brain homogenate, primary neurons, and peripheral blood mononuclear cells (at protein level).

The protein localises to the mitochondrion outer membrane. The polypeptide is Alternative prion protein (PRNP) (Homo sapiens (Human)).